Reading from the N-terminus, the 296-residue chain is Formylmethanofuran--tetrahydromethanopterin formyltransferase (296 aa).

Belongs to the FTR family. As to quaternary structure, homotetramer composed of two dimers. Dimerization is sufficient for enzyme activity, but tetramerization is required for high thermostability.

It is found in the cytoplasm. The catalysed reaction is N-formylmethanofuran + 5,6,7,8-tetrahydromethanopterin + H(+) = N(5)-formyl-5,6,7,8-tetrahydromethanopterin + methanofuran. Its pathway is one-carbon metabolism; methanogenesis from CO(2); 5,10-methenyl-5,6,7,8-tetrahydromethanopterin from CO(2): step 2/3. Its activity is regulated as follows. Requires high salt concentrations for activity and thermostability; 1.5-1.8 M KH(2)PO(4) stimulates activity while stabilizing the enzyme. Its function is as follows. Catalyzes the reversible transfer of a formyl group from formylmethanofuran (formyl-MFR) to tetrahydromethanopterin (H(4)MPT) to produce 5-formyl tetrahydromethanopterin (5-formyl-H(4)MPT) and methanofuran (MFR). Acts via a ternary-complex mechanism. Uses N-furfurylformamide much less efficiently, does not use N-methylformamide or formamide. Protein overexpressed in E.coli has very similar properties to enzyme purified from M.kandleri. The chain is Formylmethanofuran--tetrahydromethanopterin formyltransferase from Methanopyrus kandleri (strain AV19 / DSM 6324 / JCM 9639 / NBRC 100938).